The chain runs to 95 residues: Envelope glycoprotein N (95 aa).

Positions 1 to 26 (MGLMDIHNAVCSLVIGVAILIATSQA) are cleaved as a signal peptide. Over 27–55 (TFVDWGSSITSMGDFWESTCSAVGVSIAF) the chain is Virion surface. The helical transmembrane segment at 56–76 (SSGFSVLFYMGLVAVISALLA) threads the bilayer. Residues 77–95 (GSYHACFRLFTADMFKEEW) are Intravirion-facing.

It belongs to the herpesviridae glycoprotein N family. Interacts (via N-terminus) with gM (via N-terminus). The gM-gN heterodimer forms the gCII complex.

It localises to the virion membrane. The protein resides in the host membrane. Its subcellular location is the host Golgi apparatus. The protein localises to the host trans-Golgi network. Its function is as follows. Envelope glycoprotein necessary for proper maturation of gM and modulation of its membrane fusion activity. Also plays a critical role in virion morphogenesis. The polypeptide is Envelope glycoprotein N (Gallus gallus (Chicken)).